Here is a 476-residue protein sequence, read N- to C-terminus: MAPGPARISLGSQLLPMVPLLLLLRGAGCGHRGPSWSSLPSAAAGLQGDRDSQQSPGDAAAALGPGAQDMVAIHMLRLYEKYNRRGAPPGGGNTVRSFRARLEMIDQKPVYFFNLTSMQDSEMILTAAFHFYSEPPRWPRAREVFCKPRAKNASCRLLTPGLPARLHLIFRSLSQNTATQGLLRGAMALTPPPRGLWQAKDISSIIKAARRDGELLLSAQLDTGEKDPGVPRPSSHMPYILVYANDLAISEPNSVAVSLQRYDPFPAGDFEPGAAPNSSADPRVRRAAQVSKPLQDNELPGLDERPAPALHAQNFHKHEFWSSPFRALKPRTGRKDRKKKDQDTFTAASSQVLDFDEKTMQKARRRQWDEPRVCSRRYLKVDFADIGWNEWIISPKSFDAYYCAGACEFPMPKIVRPSNHATIQSIVRAVGIVPGIPEPCCVPDKMNSLGVLFLDENRNAVLKVYPNMSVETCACR.

The first 29 residues, 1-29 (MAPGPARISLGSQLLPMVPLLLLLRGAGC), serve as a signal peptide directing secretion. Residues 30–366 (GHRGPSWSSL…EKTMQKARRR (337 aa)) constitute a propeptide that is removed on maturation. Residues 39 to 63 (LPSAAAGLQGDRDSQQSPGDAAAAL) form a disordered region. N-linked (GlcNAc...) asparagine glycosylation is found at Asn-114, Asn-152, and Asn-277. Residues 268–301 (GDFEPGAAPNSSADPRVRRAAQVSKPLQDNELPG) form a disordered region. 3 cysteine pairs are disulfide-bonded: Cys-374/Cys-441, Cys-403/Cys-473, and Cys-407/Cys-475. An N-linked (GlcNAc...) asparagine glycan is attached at Asn-467.

It belongs to the TGF-beta family. In terms of assembly, homodimer or heterodimer. Can form a non-covalent complex of the mature region and the pro-region. As to expression, highly expressed in epididymal adipose tissue, brain, bone and aorta and to a lesser extent in liver and spleen. Expressed at higher levels in preadipocytes than in mature adipocytes. Strongly expressed in glial cells of the cerebellum.

It localises to the secreted. Functionally, growth factor involved in osteogenesis and adipogenesis. Plays an inhibitory role in the process of osteoblast differentiation via SMAD2/3 pathway. Plays an inhibitory role in the process of adipogenesis. This is Growth/differentiation factor 10 from Mus musculus (Mouse).